A 378-amino-acid polypeptide reads, in one-letter code: 3,6-diketocamphane 1,6-monooxygenase (378 aa).

FMN contacts are provided by residues histidine 10, serine 44, methionine 76, and 201 to 209 (TGFSYNSPS).

It belongs to the bacterial luciferase oxidoreductase family. In terms of assembly, homodimer. Likely forms a loose transient complex with a P.putida flavin reductase that provides the required FMNH(2) to the enzyme.

It carries out the reaction (1S,4S)-bornane-2,5-dione + FMNH2 + O2 = (1S,4S)-5-oxo-1,2-campholide + FMN + H2O + H(+). Functionally, involved in the degradation and assimilation of (-)-camphor, which allows P.putida strain NCIMB 10007 to grow on this enantiomer of camphor as the sole carbon source. Catalyzes the FMNH(2)-dependent lactonization of 3,6-diketocamphane via a Baeyer-Villiger oxidation to produce the unstable lactone 5-oxo-1,2-campholide with (S,S) configuration, that presumably undergoes spontaneous hydrolysis to form 2-oxo-Delta(3)-4,5,5-trimethylcyclopentenylacetate. Is also able to convert (-)-camphor to the corresponding lactone in vitro. Shows no conversion of (+)-camphor, (+)-fenchone, (-)-fenchone, and (+)-nopinone. Acts on other bicyclic ketones but very poorly on a few 2- and 4-substituted monocyclic ketones. This chain is 3,6-diketocamphane 1,6-monooxygenase, found in Pseudomonas putida (Arthrobacter siderocapsulatus).